Here is a 122-residue protein sequence, read N- to C-terminus: Short coiled-coil protein (122 aa).

A disordered region spans residues 1 to 26 (MDGLNTGEEEDSAFTSISLTDDTDHS). Positions 43–101 (NADMDAVDAENQVELEEKTRLINQVLELQHTLEDLSARVDAVKEENLKLKSENQVLGQY) form a coiled coil.

This sequence belongs to the SCOC family. In terms of assembly, homodimer. Interacts with ARL1, ARL2 and ARL3. Directly interacts with FEZ1 and UVRAG. The interaction with UVRAG is reduced by amino acid starvation, but the complex is stabilized in the presence of FEZ1. Interacts with NRBF2.

The protein localises to the golgi apparatus membrane. Its subcellular location is the golgi apparatus. It localises to the trans-Golgi network. It is found in the cytoplasm. The protein resides in the cytosol. Positive regulator of amino acid starvation-induced autophagy. This is Short coiled-coil protein (Scoc) from Rattus norvegicus (Rat).